The following is a 410-amino-acid chain: Calsequestrin-2 (410 aa).

The first 19 residues, 1-19 (MKRTHLFIAGLYLLASCRA), serve as a signal peptide directing secretion. The calcium regulated hydrophobic site stretch occupies residues 221–242 (MDEPIAIPDKPYTEEELVEFVK). Tyr-282 is subject to Phosphotyrosine. N-linked (GlcNAc...) asparagine glycans are attached at residues Asn-335 and Asn-395. The tract at residues 364–410 (DVLSGKINTEDDDNEEGDDGDDDEDDDDDDGNNSDEESNDDSDDDDE) is disordered. Positions 373–410 (EDDDNEEGDDGDDDEDDDDDDGNNSDEESNDDSDDDDE) are enriched in acidic residues. A phosphoserine; by CK2 mark is found at Ser-397, Ser-401, and Ser-405.

It belongs to the calsequestrin family. In terms of assembly, interacts with ASPH. Monomer, homodimer and homooligomer. Mostly monomeric in the absence of calcium. Forms higher oligomers in a calcium-dependent manner. Dimers associate to form tetramers, that then form linear homomer chains. Interacts with TRDN. In terms of processing, phosphorylation in the C-terminus, probably by CK2, moderately increases calcium buffering capacity. N-glycosylated. In terms of tissue distribution, detected in heart muscle (at protein level).

The protein localises to the sarcoplasmic reticulum lumen. Calsequestrin is a high-capacity, moderate affinity, calcium-binding protein and thus acts as an internal calcium store in muscle. Calcium ions are bound by clusters of acidic residues at the protein surface, especially at the interface between subunits. Can bind around 60 Ca(2+) ions. Regulates the release of lumenal Ca(2+) via the calcium release channel RYR2; this plays an important role in triggering muscle contraction. Plays a role in excitation-contraction coupling in the heart and in regulating the rate of heart beats. The sequence is that of Calsequestrin-2 (CASQ2) from Canis lupus familiaris (Dog).